A 750-amino-acid polypeptide reads, in one-letter code: Alpha-galactosidase C (750 aa).

An N-terminal signal peptide occupies residues 1–26 (MFRSTATVAAATAMGLLTATGHGSLA). N-linked (GlcNAc...) asparagine glycans are attached at residues N58, N162, N186, N194, N366, N428, N432, and N453. The active-site Nucleophile is D511. D573 (proton donor) is an active-site residue.

This sequence belongs to the glycosyl hydrolase 36 family. In terms of assembly, homotetramer. The cofactor is Mg(2+). Requires NAD(+) as cofactor.

The protein localises to the secreted. The enzyme catalyses Hydrolysis of terminal, non-reducing alpha-D-galactose residues in alpha-D-galactosides, including galactose oligosaccharides, galactomannans and galactolipids.. Hydrolyzes a variety of simple alpha-D-galactoside as well as more complex molecules such as oligosaccharides and polysaccharides. Active on paranitrophenyl-alpha-galactoside, raffinose, locust bean gum and gum guar. The protein is Alpha-galactosidase C (aglC) of Emericella nidulans (strain FGSC A4 / ATCC 38163 / CBS 112.46 / NRRL 194 / M139) (Aspergillus nidulans).